Consider the following 182-residue polypeptide: Dipetalodipin (182 aa).

The first 18 residues, 1 to 18, serve as a signal peptide directing secretion; that stretch reads MKTIIAAIFLGILMHAFA. 3 disulfides stabilise this stretch: Cys-21-Cys-134, Cys-55-Cys-181, and Cys-87-Cys-103.

It belongs to the calycin superfamily. Triabin family. In terms of tissue distribution, expressed in salivary glands.

It is found in the secreted. Inhibits platelet aggregation, vasoconstriction, and angiogenesis through binding to distinct eicosanoids involved in inflammation (acts as a scavenger), and has a role in inhibiting host innate immunity by impairing platelet-assisted formation of neutrophil extracellular traps (NETs). Inhibits platelet aggregation by collagen (IC(50)=30 nM), thromboxane A2 mimetic (TXA2 mimetic), or arachidonic acid (AA) without affecting aggregation induced by ADP, convulxin (GP6 agonist), PMA, and ristocetin (vWF-dependent platelet agglutinator). Binds with high affinity to TXA2, TXB2, prostaglandine H2 mimetic (PGH2 mimetic), PGD2, PGJ2, and PGF2alpha. Also interacts with 15(S)-hydroxyeicosatetraenoic acid (HETE), being the first calycin/lipocalin described to date to bind to a derivative of 15-lipoxygenase. Binding is not observed to other prostaglandins, leukotrienes, HETEs, lipids, and biogenic amines. It prevents contraction of rat uterus stimulated by PGF2alpha and induces relaxation of aorta previously contracted with TXA2 mimetic. In addition, it inhibits angiogenesis mediated by 15(S)-HETE and does not enhance inhibition of collagen-induced platelet aggregation by SQ29548 (TXA2 antagonist) and indomethacin. Also impairs platelet-assisted formation of neutrophil extracellular traps (NETs). NETs are web-like structures of DNA and proteins that play an important role in killing of pathogens. In addition, NETs are implicated in thrombus formation. In vivo, this protein exhibits antithrombotic activity in two distinct mice models that are highly dependent on platelets. It is noteworthy that it inhibits thrombosis without promoting excessive bleeding. This Dipetalogaster maximus (Blood-sucking bug) protein is Dipetalodipin.